A 148-amino-acid chain; its full sequence is U2 snRNP component IST3 (148 aa).

The region spanning 31 to 109 is the RRM domain; the sequence is AYIYIGNLNR…RALKIDHTFY (79 aa).

It belongs to the IST3 family. As to quaternary structure, component of the 45S U1.U2.U4/U6.U5 penta-snRNP particle, a subcomplex of the spliceosome. Belongs to the CWC complex (or CEF1-associated complex), a spliceosome sub-complex reminiscent of a late-stage spliceosome composed of the U2, U5 and U6 snRNAs and at least BUD13, BUD31, BRR2, CDC40, CEF1, CLF1, CUS1, CWC2, CWC15, CWC21, CWC22, CWC23, CWC24, CWC25, CWC27, ECM2, HSH155, IST3, ISY1, LEA1, MSL1, NTC20, PRP8, PRP9, PRP11, PRP19, PRP21, PRP22, PRP45, PRP46, SLU7, SMB1, SMD1, SMD2, SMD3, SMX2, SMX3, SNT309, SNU114, SPP2, SYF1, SYF2, RSE1 and YJU2. Belongs to the pre-mRNA retention and splicing (RES) complex composed of at least BUD13, IST3 and PML1. Subunit of the U2 snRNP. Interacts with RDS3.

It is found in the cytoplasm. The protein localises to the nucleus. Functionally, required for pre-mRNA splicing and spliceosome assembly. As part of the pre-mRNA retention and splicing (RES) complex, required for nuclear pre-mRNA retention and efficient splicing. Required for MER1-activated splicing. This Saccharomyces cerevisiae (strain ATCC 204508 / S288c) (Baker's yeast) protein is U2 snRNP component IST3 (IST3).